Consider the following 88-residue polypeptide: LYR motif-containing protein 2 (88 aa).

A mitochondrion-targeting transit peptide spans 1–19; it reads MAASRLPPATLTLKQFMRR.

The protein belongs to the complex I LYR family.

Its subcellular location is the mitochondrion. Functionally, involved in efficient integration of the N-module into mitochondrial respiratory chain complex I. In Rattus norvegicus (Rat), this protein is LYR motif-containing protein 2 (Lyrm2).